The primary structure comprises 430 residues: Enolase (430 aa).

(2R)-2-phosphoglycerate is bound at residue Q163. E205 functions as the Proton donor in the catalytic mechanism. Positions 242, 287, and 314 each coordinate Mg(2+). Residues K339, R368, S369, and K390 each coordinate (2R)-2-phosphoglycerate. K339 functions as the Proton acceptor in the catalytic mechanism.

The protein belongs to the enolase family. The cofactor is Mg(2+).

Its subcellular location is the cytoplasm. It is found in the secreted. The protein resides in the cell surface. The enzyme catalyses (2R)-2-phosphoglycerate = phosphoenolpyruvate + H2O. It participates in carbohydrate degradation; glycolysis; pyruvate from D-glyceraldehyde 3-phosphate: step 4/5. In terms of biological role, catalyzes the reversible conversion of 2-phosphoglycerate (2-PG) into phosphoenolpyruvate (PEP). It is essential for the degradation of carbohydrates via glycolysis. This is Enolase from Bacillus pumilus (strain SAFR-032).